The chain runs to 299 residues: Peroxisomal biogenesis factor 19 (299 aa).

A disordered region spans residues 1–61 (MAAAEEGCGV…KRAPGDTAKD (61 aa)). N-acetylalanine is present on alanine 2. Residues 2 to 56 (AAAEEGCGVGVEDDRELEELLESALDDFDKAKPSPEHAPTISAPDASGPQKRAPG) form a docking to the peroxisome membrane and binding to PEX3 region. Positions 2–91 (AAAEEGCGVG…QATAEFEKAM (90 aa)) are necessary for PEX19 function on peroxisome biogenesis. The span at 12-27 (VEDDRELEELLESALD) shows a compositional bias: acidic residues. A phosphoserine mark is found at serine 35 and serine 66. The residue at position 236 (threonine 236) is a Phosphothreonine. The residue at position 296 (cysteine 296) is a Cysteine methyl ester. A lipid anchor (S-farnesyl cysteine) is attached at cysteine 296. Positions 297-299 (LIM) are cleaved as a propeptide — removed in mature form.

The protein belongs to the peroxin-19 family. Interacts with a broad range of peroxisomal membrane proteins, including PEX3, PEX10, PEX11A, PEX11B, PEX12, PEX13, PEX14 and PEX16, PXMP2/PMP22, PXMP4/PMP24, SLC25A17/PMP34, ABCD1/ALDP, ABCD2/ALDRP, and ABCD3/PMP70. Also interacts with the tumor suppressor CDKN2A/p19ARF.

The protein resides in the cytoplasm. It localises to the peroxisome membrane. Functionally, necessary for early peroxisomal biogenesis. Acts both as a cytosolic chaperone and as an import receptor for peroxisomal membrane proteins (PMPs). Binds and stabilizes newly synthesized PMPs in the cytoplasm by interacting with their hydrophobic membrane-spanning domains, and targets them to the peroxisome membrane by binding to the integral membrane protein PEX3. Excludes CDKN2A from the nucleus and prevents its interaction with MDM2, which results in active degradation of TP53. In Mus musculus (Mouse), this protein is Peroxisomal biogenesis factor 19 (Pex19).